The following is a 189-amino-acid chain: Ion-translocating oxidoreductase complex subunit B (189 aa).

The hydrophobic stretch occupies residues 1–26; sequence MSAVMIAVVLLGLLALVFGAILGFAA. The 4Fe-4S domain occupies 32-90; sequence EGDPLVDQVESLLPQTQCGQCGYPGCRPYAEAIAGGDQINKCPPGGTATMEKIAELMGV. 12 residues coordinate [4Fe-4S] cluster: Cys-49, Cys-52, Cys-57, Cys-73, Cys-114, Cys-117, Cys-120, Cys-124, Cys-144, Cys-147, Cys-150, and Cys-154. 4Fe-4S ferredoxin-type domains follow at residues 105–134 and 136–164; these read KVAYIREDECIGCTKCIQACPVDAIVGAGK and MHTVITQDCTGCDLCVEPCPVDCIDMLPV.

Belongs to the 4Fe4S bacterial-type ferredoxin family. RnfB subfamily. In terms of assembly, the complex is composed of six subunits: RnfA, RnfB, RnfC, RnfD, RnfE and RnfG. Requires [4Fe-4S] cluster as cofactor.

Its subcellular location is the cell inner membrane. Its function is as follows. Part of a membrane-bound complex that couples electron transfer with translocation of ions across the membrane. This is Ion-translocating oxidoreductase complex subunit B from Shewanella amazonensis (strain ATCC BAA-1098 / SB2B).